The sequence spans 182 residues: ADP-ribosylation factor 1 (182 aa).

Gly-2 is lipidated: N-myristoyl glycine. GTP is bound by residues 24–31 (GLDNAGKT), 67–71 (DLGGQ), and 126–129 (NKQD).

The protein belongs to the small GTPase superfamily. Arf family.

It is found in the golgi apparatus. The catalysed reaction is GTP + H2O = GDP + phosphate + H(+). Functionally, GTP-binding protein involved in protein trafficking; may modulate vesicle budding and uncoating within the Golgi apparatus. The chain is ADP-ribosylation factor 1 (ARF1) from Brassica rapa subsp. pekinensis (Chinese cabbage).